The primary structure comprises 305 residues: Oxygen-dependent coproporphyrinogen-III oxidase (305 aa).

Position 92 (Ser92) interacts with substrate. Residues His96 and His106 each coordinate a divalent metal cation. Residue His106 is the Proton donor of the active site. 108–110 is a binding site for substrate; sequence NVR. 2 residues coordinate a divalent metal cation: His145 and His175. Residues 239 to 274 are important for dimerization; the sequence is YVEFNLLFDRGTLFGLQSGGRAESILISLPPLVRWE. 257–259 is a binding site for substrate; sequence GGR.

The protein belongs to the aerobic coproporphyrinogen-III oxidase family. In terms of assembly, homodimer. A divalent metal cation serves as cofactor.

It is found in the cytoplasm. The enzyme catalyses coproporphyrinogen III + O2 + 2 H(+) = protoporphyrinogen IX + 2 CO2 + 2 H2O. The protein operates within porphyrin-containing compound metabolism; protoporphyrin-IX biosynthesis; protoporphyrinogen-IX from coproporphyrinogen-III (O2 route): step 1/1. In terms of biological role, involved in the heme biosynthesis. Catalyzes the aerobic oxidative decarboxylation of propionate groups of rings A and B of coproporphyrinogen-III to yield the vinyl groups in protoporphyrinogen-IX. The protein is Oxygen-dependent coproporphyrinogen-III oxidase of Xylella fastidiosa (strain 9a5c).